We begin with the raw amino-acid sequence, 668 residues long: Exoribonuclease 2 (668 aa).

An RNB domain is found at 193–521 (RIEMTHVPFV…INHRMLKAVI (329 aa)). The 83-residue stretch at 568–650 (QTCFTGEIFD…ENRSLVAKPT (83 aa)) folds into the S1 motif domain.

The protein belongs to the RNR ribonuclease family. RNase II subfamily.

Its subcellular location is the cytoplasm. The enzyme catalyses Exonucleolytic cleavage in the 3'- to 5'-direction to yield nucleoside 5'-phosphates.. Its function is as follows. Involved in mRNA degradation. Hydrolyzes single-stranded polyribonucleotides processively in the 3' to 5' direction. In Vibrio parahaemolyticus serotype O3:K6 (strain RIMD 2210633), this protein is Exoribonuclease 2.